A 302-amino-acid chain; its full sequence is Deoxyhypusine hydroxylase (302 aa).

6 HEAT-like PBS-type repeats span residues 23–49 (ERFRALFTLKNIGGGAAIEAISKAFDD), 54–80 (LKHELAYCLGQMQDAQALDILTKVLKD), 87–113 (VRHEAAEAMGAIGHPDVLPILEEYKQD), 175–201 (DRYRAMFSLRNLRTEESVLAIAEGLKD), 206–232 (FRHEVAFVLGQLQEPCSIPFLQENLED), and 239–265 (VRHECAEALGAIATEDCIQILNRYAED). Fe cation-binding residues include His56, Glu57, His89, and Glu90. Residues His208, Glu209, His241, and Glu242 each contribute to the Fe cation site.

The protein belongs to the deoxyhypusine hydroxylase family. Fe(2+) is required as a cofactor.

Its subcellular location is the endoplasmic reticulum membrane. It catalyses the reaction [eIF5A protein]-deoxyhypusine + AH2 + O2 = [eIF5A protein]-hypusine + A + H2O. It functions in the pathway protein modification; eIF5A hypusination. Functionally, catalyzes the hydroxylation of the N(6)-(4-aminobutyl)-L-lysine intermediate to form hypusine, an essential post-translational modification only found in mature eIF-5A factor. Essential for organismal viability and plays a role in a wide number of important processes such as cell growth and proliferation, and regulates induction of autophagy and protein synthesis. Has a role in eIF-5A-mediated translational control. This chain is Deoxyhypusine hydroxylase, found in Drosophila melanogaster (Fruit fly).